A 135-amino-acid chain; its full sequence is Aspartate 1-decarboxylase (135 aa).

The active-site Schiff-base intermediate with substrate; via pyruvic acid is the Ser-25. Pyruvic acid (Ser) is present on Ser-25. Residue Thr-57 participates in substrate binding. Residue Tyr-58 is the Proton donor of the active site. 73 to 75 (GAA) contacts substrate.

Belongs to the PanD family. In terms of assembly, heterooctamer of four alpha and four beta subunits. It depends on pyruvate as a cofactor. Is synthesized initially as an inactive proenzyme, which is activated by self-cleavage at a specific serine bond to produce a beta-subunit with a hydroxyl group at its C-terminus and an alpha-subunit with a pyruvoyl group at its N-terminus.

The protein localises to the cytoplasm. The catalysed reaction is L-aspartate + H(+) = beta-alanine + CO2. It functions in the pathway cofactor biosynthesis; (R)-pantothenate biosynthesis; beta-alanine from L-aspartate: step 1/1. In terms of biological role, catalyzes the pyruvoyl-dependent decarboxylation of aspartate to produce beta-alanine. The chain is Aspartate 1-decarboxylase from Mycolicibacterium vanbaalenii (strain DSM 7251 / JCM 13017 / BCRC 16820 / KCTC 9966 / NRRL B-24157 / PYR-1) (Mycobacterium vanbaalenii).